Here is a 154-residue protein sequence, read N- to C-terminus: Large ribosomal subunit protein uL22c (154 aa).

This sequence belongs to the universal ribosomal protein uL22 family. In terms of assembly, part of the 50S ribosomal subunit.

The protein resides in the plastid. Its subcellular location is the chloroplast. Its function is as follows. This protein binds specifically to 23S rRNA. Functionally, the globular domain of the protein is located near the polypeptide exit tunnel on the outside of the subunit, while an extended beta-hairpin is found that lines the wall of the exit tunnel in the center of the 70S ribosome. This is Large ribosomal subunit protein uL22c (rpl22) from Platanus occidentalis (Sycamore).